The following is a 298-amino-acid chain: NADH-cytochrome b5 reductase 2 (298 aa).

The helical transmembrane segment at F13–W33 threads the bilayer. Positions R48–K152 constitute an FAD-binding FR-type domain. S155–L190 serves as a coordination point for FAD.

This sequence belongs to the flavoprotein pyridine nucleotide cytochrome reductase family. It depends on FAD as a cofactor.

The protein localises to the mitochondrion outer membrane. It carries out the reaction 2 Fe(III)-[cytochrome b5] + NADH = 2 Fe(II)-[cytochrome b5] + NAD(+) + H(+). Its function is as follows. May mediate the reduction of outer membrane cytochrome b5. The polypeptide is NADH-cytochrome b5 reductase 2 (MCR1) (Candida glabrata (strain ATCC 2001 / BCRC 20586 / JCM 3761 / NBRC 0622 / NRRL Y-65 / CBS 138) (Yeast)).